The sequence spans 118 residues: MIGIDLVSIERIEAFIAKHGQRGLERFLLPEEILLANKPETIAGFWAAKEACSKALGTGIGAEVGFHDIRLFKNPKGAPLLELSPRVKDRFEIDSCALSITHDKGFAIAVVAMEKRRA.

The Mg(2+) site is built by D5 and E50.

Belongs to the P-Pant transferase superfamily. AcpS family. It depends on Mg(2+) as a cofactor.

The protein resides in the cytoplasm. The enzyme catalyses apo-[ACP] + CoA = holo-[ACP] + adenosine 3',5'-bisphosphate + H(+). Transfers the 4'-phosphopantetheine moiety from coenzyme A to a Ser of acyl-carrier-protein. This Wolinella succinogenes (strain ATCC 29543 / DSM 1740 / CCUG 13145 / JCM 31913 / LMG 7466 / NCTC 11488 / FDC 602W) (Vibrio succinogenes) protein is Holo-[acyl-carrier-protein] synthase.